The sequence spans 513 residues: Cyclin-dependent kinase C-2 (513 aa).

One can recognise a Protein kinase domain in the interval 25–325; the sequence is FEKLEQIGEG…AKDALDAEYF (301 aa). Residues 31–39 and Lys54 each bind ATP; that span reads IGEGTYGQV. Thr35 is modified (phosphothreonine). Tyr36 carries the phosphotyrosine modification. The Proton acceptor role is filled by Asp164. Ser191 is subject to Phosphoserine. At Thr198 the chain carries Phosphothreonine. Residues 336-348 show a composition bias toward basic and acidic residues; it reads SLPKYEASHEFQT. The disordered stretch occupies residues 336-513; the sequence is SLPKYEASHE…RNQQQYGNWQ (178 aa). Residues 417–433 are compositionally biased toward low complexity; sequence PNRYPQGGNQGGYNPNR. Gly residues-rich tracts occupy residues 457-478 and 485-494; these read GGGM…GVGG and GPYGASGPGR. The span at 497–513 shows a compositional bias: polar residues; the sequence is NYNQGGSRNQQQYGNWQ.

This sequence belongs to the protein kinase superfamily. CMGC Ser/Thr protein kinase family. CDC2/CDKX subfamily.

The catalysed reaction is L-seryl-[protein] + ATP = O-phospho-L-seryl-[protein] + ADP + H(+). The enzyme catalyses L-threonyl-[protein] + ATP = O-phospho-L-threonyl-[protein] + ADP + H(+). It catalyses the reaction [DNA-directed RNA polymerase] + ATP = phospho-[DNA-directed RNA polymerase] + ADP + H(+). The sequence is that of Cyclin-dependent kinase C-2 (CDKC-2) from Oryza sativa subsp. japonica (Rice).